The chain runs to 426 residues: Glutamate-1-semialdehyde 2,1-aminomutase (426 aa).

Residue K265 is modified to N6-(pyridoxal phosphate)lysine.

Belongs to the class-III pyridoxal-phosphate-dependent aminotransferase family. HemL subfamily. As to quaternary structure, homodimer. Pyridoxal 5'-phosphate is required as a cofactor.

It is found in the cytoplasm. It carries out the reaction (S)-4-amino-5-oxopentanoate = 5-aminolevulinate. It functions in the pathway porphyrin-containing compound metabolism; protoporphyrin-IX biosynthesis; 5-aminolevulinate from L-glutamyl-tRNA(Glu): step 2/2. The protein is Glutamate-1-semialdehyde 2,1-aminomutase of Escherichia coli O139:H28 (strain E24377A / ETEC).